A 462-amino-acid chain; its full sequence is Light-independent protochlorophyllide reductase subunit N (462 aa).

[4Fe-4S] cluster is bound by residues Cys-24, Cys-49, and Cys-109.

Belongs to the BchN/ChlN family. In terms of assembly, protochlorophyllide reductase is composed of three subunits; ChlL, ChlN and ChlB. Forms a heterotetramer of two ChlB and two ChlN subunits. The cofactor is [4Fe-4S] cluster.

It localises to the plastid. The protein localises to the chloroplast. The catalysed reaction is chlorophyllide a + oxidized 2[4Fe-4S]-[ferredoxin] + 2 ADP + 2 phosphate = protochlorophyllide a + reduced 2[4Fe-4S]-[ferredoxin] + 2 ATP + 2 H2O. The protein operates within porphyrin-containing compound metabolism; chlorophyll biosynthesis (light-independent). Functionally, component of the dark-operative protochlorophyllide reductase (DPOR) that uses Mg-ATP and reduced ferredoxin to reduce ring D of protochlorophyllide (Pchlide) to form chlorophyllide a (Chlide). This reaction is light-independent. The NB-protein (ChlN-ChlB) is the catalytic component of the complex. In Pleurastrum terricola (Filamentous green alga), this protein is Light-independent protochlorophyllide reductase subunit N.